A 115-amino-acid chain; its full sequence is Large ribosomal subunit protein bL20 (115 aa).

This sequence belongs to the bacterial ribosomal protein bL20 family.

Binds directly to 23S ribosomal RNA and is necessary for the in vitro assembly process of the 50S ribosomal subunit. It is not involved in the protein synthesizing functions of that subunit. This chain is Large ribosomal subunit protein bL20, found in Microcystis aeruginosa (strain NIES-843 / IAM M-2473).